We begin with the raw amino-acid sequence, 458 residues long: Elongation factor 1-alpha 1 (458 aa).

A N,N,N-trimethylglycine modification is found at Gly2. An N6,N6-dimethyllysine; alternate modification is found at Lys3. Lys3 is subject to N6-methyllysine; alternate. One can recognise a tr-type G domain in the interval 5–240 (KTHVNVVVIG…DAIEPPTRPT (236 aa)). Residues 14–21 (GHVDSGKS) form a G1 region. A GTP-binding site is contributed by 14 to 21 (GHVDSGKS). At Lys30 the chain carries N6-methyllysine. Residues 70–74 (GITID) form a G2 region. Lys79 bears the N6,N6,N6-trimethyllysine mark. Residues 91–94 (DAPG) form a G3 region. Residues 91–95 (DAPGH) and 153–156 (NKMD) contribute to the GTP site. The segment at 153–156 (NKMD) is G4. The tract at residues 192–194 (SGW) is G5. Lys316 is subject to N6,N6-dimethyllysine; alternate. Lys316 is modified (N6-methyllysine; alternate). Lys390 bears the N6-methyllysine mark.

It belongs to the TRAFAC class translation factor GTPase superfamily. Classic translation factor GTPase family. EF-Tu/EF-1A subfamily.

It localises to the cytoplasm. In terms of biological role, this protein promotes the GTP-dependent binding of aminoacyl-tRNA to the A-site of ribosomes during protein biosynthesis. The sequence is that of Elongation factor 1-alpha 1 (TEF1) from Candida albicans (strain SC5314 / ATCC MYA-2876) (Yeast).